The following is a 440-amino-acid chain: Protein disulfide-isomerase 5-2 (440 aa).

Residues 1–23 (MRSLKLLLCWISFLTLSISISAS) form the signal peptide. The 116-residue stretch at 24 to 139 (SDDQFTLDGT…LVRYLKKFVA (116 aa)) folds into the Thioredoxin domain. Residues cysteine 61 and cysteine 64 each act as nucleophile in the active site. Cysteines 61 and 64 form a disulfide. Phosphothreonine is present on threonine 160. Asparagine 171 carries an N-linked (GlcNAc...) asparagine glycan. The helical transmembrane segment at 376–396 (SMIGIRSVYILVFLVAVIMML) threads the bilayer. The segment at 406-440 (TGVRTATAVRERVDQATTVPEDESSEHKPSDKKED) is disordered. Positions 430-440 (SEHKPSDKKED) are enriched in basic and acidic residues.

Belongs to the protein disulfide isomerase family. As to expression, widely expressed.

It localises to the membrane. Acts as a protein-folding catalyst that interacts with nascent polypeptides to catalyze the formation, isomerization, and reduction or oxidation of disulfide bonds. In Arabidopsis thaliana (Mouse-ear cress), this protein is Protein disulfide-isomerase 5-2 (PDIL5-2).